A 260-amino-acid chain; its full sequence is Thrombin-like enzyme 1 (260 aa).

The first 18 residues, 1–18 (MVLITVLANLLILQLSYA), serve as a signal peptide directing secretion. Positions 19–24 (QKSSEL) are excised as a propeptide. In terms of domain architecture, Peptidase S1 spans 25–251 (VIGGDECNIN…HLDWIQSIIA (227 aa)). Cystine bridges form between Cys31–Cys165, Cys52–Cys68, Cys102–Cys258, Cys144–Cys212, Cys176–Cys191, and Cys202–Cys227. Residue His67 is the Charge relay system of the active site. Asn105 carries N-linked (GlcNAc...) asparagine glycosylation. Asp112 (charge relay system) is an active-site residue. Asn156 and Asn172 each carry an N-linked (GlcNAc...) asparagine glycan. Ser206 functions as the Charge relay system in the catalytic mechanism. Residue Asn253 is glycosylated (N-linked (GlcNAc...) asparagine).

Belongs to the peptidase S1 family. Snake venom subfamily. Monomer. In terms of tissue distribution, expressed by the venom gland.

The protein localises to the secreted. Its function is as follows. Thrombin-like snake venom serine protease. The protein is Thrombin-like enzyme 1 of Trimeresurus albolabris (White-lipped pit viper).